The primary structure comprises 269 residues: Probable ribosomal RNA small subunit methyltransferase A (269 aa).

The S-adenosyl-L-methionine site is built by H19, L21, G46, E67, D92, and N107.

The protein belongs to the class I-like SAM-binding methyltransferase superfamily. rRNA adenine N(6)-methyltransferase family. RsmA subfamily.

Its subcellular location is the cytoplasm. Its function is as follows. Specifically dimethylates two adjacent adenosines in the loop of a conserved hairpin near the 3'-end of 16S rRNA in the 30S particle. May play a critical role in biogenesis of 30S subunits. The chain is Probable ribosomal RNA small subunit methyltransferase A from Methanosarcina acetivorans (strain ATCC 35395 / DSM 2834 / JCM 12185 / C2A).